The primary structure comprises 345 residues: tRNA-specific 2-thiouridylase MnmA (345 aa).

Residues Leu6 to Ser13 and Leu32 each bind ATP. The active-site Nucleophile is Cys92. Cys92 and Cys191 are disulfide-bonded. Gly116 provides a ligand contact to ATP. An interaction with tRNA region spans residues Lys138–Gln140. Catalysis depends on Cys191, which acts as the Cysteine persulfide intermediate. The tract at residues Arg293 to Tyr294 is interaction with tRNA.

The protein belongs to the MnmA/TRMU family.

It is found in the cytoplasm. The enzyme catalyses S-sulfanyl-L-cysteinyl-[protein] + uridine(34) in tRNA + AH2 + ATP = 2-thiouridine(34) in tRNA + L-cysteinyl-[protein] + A + AMP + diphosphate + H(+). Catalyzes the 2-thiolation of uridine at the wobble position (U34) of tRNA, leading to the formation of s(2)U34. The chain is tRNA-specific 2-thiouridylase MnmA from Helicobacter hepaticus (strain ATCC 51449 / 3B1).